The chain runs to 88 residues: Acylphosphatase (88 aa).

The 86-residue stretch at 3-88 folds into the Acylphosphatase-like domain; sequence AARFVVSGVV…VPPTEDFVTG (86 aa). Residues Arg18 and Asn36 contribute to the active site.

Belongs to the acylphosphatase family.

It carries out the reaction an acyl phosphate + H2O = a carboxylate + phosphate + H(+). The protein is Acylphosphatase (acyP) of Xanthomonas euvesicatoria pv. vesicatoria (strain 85-10) (Xanthomonas campestris pv. vesicatoria).